Here is a 38-residue protein sequence, read N- to C-terminus: Large ribosomal subunit protein bL36 (38 aa).

This sequence belongs to the bacterial ribosomal protein bL36 family.

This is Large ribosomal subunit protein bL36 from Phytoplasma mali (strain AT).